The chain runs to 540 residues: Tyrosine-protein kinase transforming protein erbB (540 aa).

Residues 132–399 (FKKVKVLGFG…KMARDPPRYL (268 aa)) enclose the Protein kinase domain. ATP-binding positions include 138–146 (LGFGAFGTV) and Lys165. Asp257 functions as the Proton acceptor in the catalytic mechanism.

The protein belongs to the protein kinase superfamily. Tyr protein kinase family. EGF receptor subfamily.

The enzyme catalyses L-tyrosyl-[protein] + ATP = O-phospho-L-tyrosyl-[protein] + ADP + H(+). In Avian erythroblastosis virus (strain ts167), this protein is Tyrosine-protein kinase transforming protein erbB (V-ERBB).